The sequence spans 104 residues: DNA-directed RNA polymerase subunit Rpo13 (104 aa).

Disordered stretches follow at residues 1–34 (MVSGMSTEEEKEGTNDEEVSEEREVEETSEEEFP) and 76–104 (EKRDSRRKAKKAASKKVKKTKKKEKSVEG). The span at 7–31 (TEEEKEGTNDEEVSEEREVEETSEE) shows a compositional bias: acidic residues. Glu32 lines the DNA pocket. Residues 80–104 (SRRKAKKAASKKVKKTKKKEKSVEG) are compositionally biased toward basic residues. Residues 81-104 (RRKAKKAASKKVKKTKKKEKSVEG) are required to bind DNA.

This sequence belongs to the archaeal Rpo13 RNA polymerase subunit family. In terms of assembly, part of the 13-subunit RNA polymerase complex. Rpo1N and Rpo5 form a cleft which docks Rpo13. Forms predominantly dimers in solution, although monomers and trimers can also be seen. Found associated with RNAP but also as a homodimer pool in the cytoplasm in vivo.

Its subcellular location is the cytoplasm. The catalysed reaction is RNA(n) + a ribonucleoside 5'-triphosphate = RNA(n+1) + diphosphate. DNA-dependent RNA polymerase (RNAP) catalyzes the transcription of DNA into RNA using the four ribonucleoside triphosphates as substrates. A molten-globule protein, it binds dsDNA in the RNAP, in vitro binds dsDNA but not ssDNA. Its position in RNAP implies it functions in both transcription initiation and elongation. The protein is DNA-directed RNA polymerase subunit Rpo13 of Saccharolobus shibatae (strain ATCC 51178 / DSM 5389 / JCM 8931 / NBRC 15437 / B12) (Sulfolobus shibatae).